The chain runs to 407 residues: Peptidase T (407 aa).

Residue His-77 participates in Zn(2+) binding. Asp-79 is an active-site residue. Residue Asp-138 participates in Zn(2+) binding. Glu-172 (proton acceptor) is an active-site residue. The Zn(2+) site is built by Glu-173, Asp-195, and His-377.

This sequence belongs to the peptidase M20B family. Requires Zn(2+) as cofactor.

The protein resides in the cytoplasm. It carries out the reaction Release of the N-terminal residue from a tripeptide.. In terms of biological role, cleaves the N-terminal amino acid of tripeptides. The polypeptide is Peptidase T (Aeromonas hydrophila subsp. hydrophila (strain ATCC 7966 / DSM 30187 / BCRC 13018 / CCUG 14551 / JCM 1027 / KCTC 2358 / NCIMB 9240 / NCTC 8049)).